Consider the following 112-residue polypeptide: T cell receptor alpha variable 13-1 (112 aa).

Residues 1 to 20 form the signal peptide; the sequence is MTSIRAVFIFLWLQLDLVNG. The Ig-like domain occupies 21-112; sequence ENVEQHPSTL…DSAVYFCAAS (92 aa). An intrachain disulfide couples Cys42 to Cys109. N-linked (GlcNAc...) asparagine glycosylation is present at Asn86.

Alpha-beta TR is a heterodimer composed of an alpha and beta chain; disulfide-linked. The alpha-beta TR is associated with the transmembrane signaling CD3 coreceptor proteins to form the TR-CD3 (TcR or TCR). The assembly of alpha-beta TR heterodimers with CD3 occurs in the endoplasmic reticulum where a single alpha-beta TR heterodimer associates with one CD3D-CD3E heterodimer, one CD3G-CD3E heterodimer and one CD247 homodimer forming a stable octameric structure. CD3D-CD3E and CD3G-CD3E heterodimers preferentially associate with TR alpha and TR beta chains, respectively. The association of the CD247 homodimer is the last step of TcR assembly in the endoplasmic reticulum and is required for transport to the cell surface.

The protein localises to the cell membrane. V region of the variable domain of T cell receptor (TR) alpha chain that participates in the antigen recognition. Alpha-beta T cell receptors are antigen specific receptors which are essential to the immune response and are present on the cell surface of T lymphocytes. Recognize peptide-major histocompatibility (MH) (pMH) complexes that are displayed by antigen presenting cells (APC), a prerequisite for efficient T cell adaptive immunity against pathogens. Binding of alpha-beta TR to pMH complex initiates TR-CD3 clustering on the cell surface and intracellular activation of LCK that phosphorylates the ITAM motifs of CD3G, CD3D, CD3E and CD247 enabling the recruitment of ZAP70. In turn ZAP70 phosphorylates LAT, which recruits numerous signaling molecules to form the LAT signalosome. The LAT signalosome propagates signal branching to three major signaling pathways, the calcium, the mitogen-activated protein kinase (MAPK) kinase and the nuclear factor NF-kappa-B (NF-kB) pathways, leading to the mobilization of transcription factors that are critical for gene expression and essential for T cell growth and differentiation. The T cell repertoire is generated in the thymus, by V-(D)-J rearrangement. This repertoire is then shaped by intrathymic selection events to generate a peripheral T cell pool of self-MH restricted, non-autoaggressive T cells. Post-thymic interaction of alpha-beta TR with the pMH complexes shapes TR structural and functional avidity. This chain is T cell receptor alpha variable 13-1, found in Homo sapiens (Human).